A 593-amino-acid chain; its full sequence is Aspartate--tRNA(Asp/Asn) ligase (593 aa).

Glu172 provides a ligand contact to L-aspartate. An aspartate region spans residues 196 to 199 (QLFK). Residue Arg218 coordinates L-aspartate. ATP contacts are provided by residues 218-220 (RDE) and Gln227. His450 serves as a coordination point for L-aspartate. Residue Glu484 coordinates ATP. Arg491 is a binding site for L-aspartate. 536–539 (GLDR) serves as a coordination point for ATP.

Belongs to the class-II aminoacyl-tRNA synthetase family. Type 1 subfamily. Homodimer.

It localises to the cytoplasm. The enzyme catalyses tRNA(Asx) + L-aspartate + ATP = L-aspartyl-tRNA(Asx) + AMP + diphosphate. Aspartyl-tRNA synthetase with relaxed tRNA specificity since it is able to aspartylate not only its cognate tRNA(Asp) but also tRNA(Asn). Reaction proceeds in two steps: L-aspartate is first activated by ATP to form Asp-AMP and then transferred to the acceptor end of tRNA(Asp/Asn). The sequence is that of Aspartate--tRNA(Asp/Asn) ligase from Nitrosomonas eutropha (strain DSM 101675 / C91 / Nm57).